The following is a 626-amino-acid chain: Glutamine--fructose-6-phosphate aminotransferase [isomerizing] (626 aa).

Cys-2 functions as the Nucleophile; for GATase activity in the catalytic mechanism. Residues 2–222 form the Glutamine amidotransferase type-2 domain; sequence CGIVGYIGPQ…NGELARLTPT (221 aa). SIS domains are found at residues 293-441 and 471-616; these read LPPS…QRQS and YIEA…VDQP. Catalysis depends on Lys-621, which acts as the For Fru-6P isomerization activity.

In terms of assembly, homodimer.

The protein resides in the cytoplasm. The enzyme catalyses D-fructose 6-phosphate + L-glutamine = D-glucosamine 6-phosphate + L-glutamate. Its function is as follows. Catalyzes the first step in hexosamine metabolism, converting fructose-6P into glucosamine-6P using glutamine as a nitrogen source. The polypeptide is Glutamine--fructose-6-phosphate aminotransferase [isomerizing] (Thermosynechococcus vestitus (strain NIES-2133 / IAM M-273 / BP-1)).